The following is a 2475-amino-acid chain: Polyprotein pp220 (2475 aa).

The N-myristoyl glycine; by host moiety is linked to residue G2. The stretch at 2184–2211 (RNQIIGELNAFRTQLEDTLREVNNLVQT) forms a coiled coil.

This sequence belongs to the asfivirus polyprotein pp220 family. Post-translationally, specific enzymatic cleavages in vivo by the viral pS273R protease yield mature proteins.

It localises to the host cytoplasm. It is found in the host perinuclear region. The protein localises to the virion. The protein resides in the host nucleus. In terms of biological role, essential for the core assembly. Its myristoyl moiety may function as a membrane-anchoring signal to bind the developing core shell to the inner viral envelope. Functionally, the structural protein p34 is a component of the virus core shell. The structural protein p14 is a component of the virus core shell. Its function is as follows. The structural protein p37 is a component of the virus core shell. In terms of biological role, the structural protein p150 is a component of the virus core shell. The protein is Polyprotein pp220 of African swine fever virus (isolate Tick/Malawi/Lil 20-1/1983) (ASFV).